The following is a 137-amino-acid chain: Putative pre-16S rRNA nuclease (137 aa).

Belongs to the YqgF nuclease family.

Its subcellular location is the cytoplasm. Functionally, could be a nuclease involved in processing of the 5'-end of pre-16S rRNA. This chain is Putative pre-16S rRNA nuclease, found in Bacillus mycoides (strain KBAB4) (Bacillus weihenstephanensis).